We begin with the raw amino-acid sequence, 453 residues long: Mitochondrial import inner membrane translocase subunit TIM44 (453 aa).

T129 carries the post-translational modification Phosphothreonine. 167 to 174 (GGEKLGKT) contacts ATP. Position 178 is an N6-succinyllysine (K178). S181 is modified (phosphoserine). The residue at position 218 (K218) is an N6-succinyllysine.

This sequence belongs to the Tim44 family. Probable component of the PAM complex at least composed of a mitochondrial HSP70 protein, GRPEL1 or GRPEL2, TIMM44, TIMM16/PAM16 and TIMM14/DNAJC19. The complex interacts with the TIMM23 component of the TIM23 complex. Interacts with SLC25A4/ANT1 and SLC25A5/ANT2; leading to inhibit the presequence translocase TIMM23, thereby promoting stabilization of PINK1.

The protein resides in the mitochondrion inner membrane. The protein localises to the mitochondrion matrix. Functionally, essential component of the PAM complex, a complex required for the translocation of transit peptide-containing proteins from the inner membrane into the mitochondrial matrix in an ATP-dependent manner. Recruits mitochondrial HSP70 to drive protein translocation into the matrix using ATP as an energy source. The chain is Mitochondrial import inner membrane translocase subunit TIM44 (Timm44) from Rattus norvegicus (Rat).